The chain runs to 186 residues: Methyl-CpG-binding domain-containing protein 4 (186 aa).

The CW-type zinc finger occupies 22–77; the sequence is GRLIDTYAAQCDNCHKWRVIDSQEEYEDIRSKMLEDPFNCQKKQGMSCEEPADIDY. Residues 31 to 69 carry the MBD-associated domain (MAD) motif; the sequence is QCDNCHKWRVIDSQEEYEDIRSKMLEDPFNCQKKQGMSC. Zn(2+) is bound by residues cysteine 32, cysteine 35, cysteine 61, and cysteine 69. In terms of domain architecture, MBD spans 83 to 153; that stretch reads WVIDKPGLPK…GDFNFTVPKV (71 aa). Positions 154-186 are disordered; the sequence is MEDTVPPDPKLGSPFPSTTTTTSEKSSVKQSHN. Residues 166 to 178 are compositionally biased toward low complexity; that stretch reads SPFPSTTTTTSEK.

In terms of tissue distribution, expressed in rosette leaves, buds, flowers, stems, mature seeds and roots.

It is found in the nucleus. Functionally, transcriptional regulator that binds CpG, CpNpN and CpNpG (N is A, T, or C) islands in promoters regardless the DNA methylation status. Plays probably a role in gene silencing. In Arabidopsis thaliana (Mouse-ear cress), this protein is Methyl-CpG-binding domain-containing protein 4 (MBD4).